We begin with the raw amino-acid sequence, 360 residues long: Protein RecA (360 aa).

Position 66–73 (66–73 (GPESSGKT)) interacts with ATP. Residues 330-360 (DAKAIEERENPEKVKQDKEVPVNKDASDEKK) are disordered.

Belongs to the RecA family.

It localises to the cytoplasm. Its function is as follows. Can catalyze the hydrolysis of ATP in the presence of single-stranded DNA, the ATP-dependent uptake of single-stranded DNA by duplex DNA, and the ATP-dependent hybridization of homologous single-stranded DNAs. It interacts with LexA causing its activation and leading to its autocatalytic cleavage. The protein is Protein RecA of Lactobacillus johnsonii (strain CNCM I-12250 / La1 / NCC 533).